The following is a 48-amino-acid chain: MAVPKRRVSKTRAAKRRTHYKVSLPIPVKDKDGSWKLPHRINTKTGEY.

Positions 1–20 (MAVPKRRVSKTRAAKRRTHY) are enriched in basic residues. The disordered stretch occupies residues 1–48 (MAVPKRRVSKTRAAKRRTHYKVSLPIPVKDKDGSWKLPHRINTKTGEY).

It belongs to the bacterial ribosomal protein bL32 family.

The chain is Large ribosomal subunit protein bL32 from Campylobacter hominis (strain ATCC BAA-381 / DSM 21671 / CCUG 45161 / LMG 19568 / NCTC 13146 / CH001A).